Here is a 207-residue protein sequence, read N- to C-terminus: Ribonuclease HII (207 aa).

Residues 18-207 enclose the RNase H type-2 domain; that stretch reads TYLSGSDEAG…PIKKISKETS (190 aa). Residues aspartate 24, glutamate 25, and aspartate 116 each contribute to the a divalent metal cation site.

It belongs to the RNase HII family. Requires Mn(2+) as cofactor. Mg(2+) is required as a cofactor.

Its subcellular location is the cytoplasm. The enzyme catalyses Endonucleolytic cleavage to 5'-phosphomonoester.. Functionally, endonuclease that specifically degrades the RNA of RNA-DNA hybrids. The chain is Ribonuclease HII from Mycoplasma mycoides subsp. mycoides SC (strain CCUG 32753 / NCTC 10114 / PG1).